The primary structure comprises 421 residues: Probable dual-specificity RNA methyltransferase RlmN (421 aa).

The segment at 1 to 23 (MTATTAESGRPDQPPTAEAGRPV) is disordered. Glu-127 serves as the catalytic Proton acceptor. The 240-residue stretch at 133 to 372 (YPDRATVCVS…VTTVRDTRGR (240 aa)) folds into the Radical SAM core domain. Cys-140 and Cys-378 are joined by a disulfide. The [4Fe-4S] cluster site is built by Cys-147, Cys-151, and Cys-154. Residues 202 to 203 (GE), Ser-236, 259 to 261 (SLH), and Asn-335 contribute to the S-adenosyl-L-methionine site. Residue Cys-378 is the S-methylcysteine intermediate of the active site. A disordered region spans residues 383-421 (AEPAGKPERTDRPEQVGSDRLVEFGAVGSTTPDGDRVLR). Over residues 387–396 (GKPERTDRPE) the composition is skewed to basic and acidic residues.

The protein belongs to the radical SAM superfamily. RlmN family. Requires [4Fe-4S] cluster as cofactor.

The protein resides in the cytoplasm. It carries out the reaction adenosine(2503) in 23S rRNA + 2 reduced [2Fe-2S]-[ferredoxin] + 2 S-adenosyl-L-methionine = 2-methyladenosine(2503) in 23S rRNA + 5'-deoxyadenosine + L-methionine + 2 oxidized [2Fe-2S]-[ferredoxin] + S-adenosyl-L-homocysteine. It catalyses the reaction adenosine(37) in tRNA + 2 reduced [2Fe-2S]-[ferredoxin] + 2 S-adenosyl-L-methionine = 2-methyladenosine(37) in tRNA + 5'-deoxyadenosine + L-methionine + 2 oxidized [2Fe-2S]-[ferredoxin] + S-adenosyl-L-homocysteine. In terms of biological role, specifically methylates position 2 of adenine 2503 in 23S rRNA and position 2 of adenine 37 in tRNAs. This chain is Probable dual-specificity RNA methyltransferase RlmN, found in Frankia casuarinae (strain DSM 45818 / CECT 9043 / HFP020203 / CcI3).